Consider the following 186-residue polypeptide: Tumor necrosis factor, alpha-induced protein 8-like protein 2 A (186 aa).

It belongs to the TNFAIP8 family. TNFAIP8L2 subfamily.

In terms of biological role, acts as a negative regulator of innate and adaptive immunity by maintaining immune homeostasis. Negative regulator of Toll-like receptor and T-cell receptor function. Prevents hyperresponsiveness of the immune system and maintains immune homeostasis. Inhibits jun/ap1 and NF-kappa-B activation. Promotes Fas-induced apoptosis. The protein is Tumor necrosis factor, alpha-induced protein 8-like protein 2 A (tnfaip8l2a) of Danio rerio (Zebrafish).